A 132-amino-acid chain; its full sequence is Ribosome-binding factor A (132 aa).

This sequence belongs to the RbfA family. Monomer. Binds 30S ribosomal subunits, but not 50S ribosomal subunits or 70S ribosomes.

The protein localises to the cytoplasm. Functionally, one of several proteins that assist in the late maturation steps of the functional core of the 30S ribosomal subunit. Associates with free 30S ribosomal subunits (but not with 30S subunits that are part of 70S ribosomes or polysomes). Required for efficient processing of 16S rRNA. May interact with the 5'-terminal helix region of 16S rRNA. The chain is Ribosome-binding factor A from Xanthomonas campestris pv. campestris (strain 8004).